A 29-amino-acid chain; its full sequence is Kunitz-type serine protease inhibitor RsTIQ7 (29 aa).

The region spanning 6-26 (QCVPTADPGPCKAYIPMWWYN) is the BPTI/Kunitz inhibitor domain.

In terms of biological role, serine protease inhibitor. Inhibits trypsin, elastase, plasmin and kallikrein. This chain is Kunitz-type serine protease inhibitor RsTIQ7, found in Rhipicephalus sanguineus (Brown dog tick).